Consider the following 303-residue polypeptide: Dihydroorotate dehydrogenase B (NAD(+)), catalytic subunit (303 aa).

FMN is bound by residues serine 23 and 47-48 (KS). Residues lysine 47, 71–75 (NAMGL), and asparagine 125 contribute to the substrate site. FMN is bound at residue asparagine 125. The active-site Nucleophile is cysteine 128. FMN is bound by residues lysine 163 and isoleucine 189. A substrate-binding site is contributed by 190-191 (NT). FMN contacts are provided by residues glycine 215, 241–242 (GG), and 263–264 (GT).

The protein belongs to the dihydroorotate dehydrogenase family. Type 1 subfamily. In terms of assembly, heterotetramer of 2 PyrK and 2 PyrD type B subunits. Requires FMN as cofactor.

The protein localises to the cytoplasm. It carries out the reaction (S)-dihydroorotate + NAD(+) = orotate + NADH + H(+). The protein operates within pyrimidine metabolism; UMP biosynthesis via de novo pathway; orotate from (S)-dihydroorotate (NAD(+) route): step 1/1. Catalyzes the conversion of dihydroorotate to orotate with NAD(+) as electron acceptor. The polypeptide is Dihydroorotate dehydrogenase B (NAD(+)), catalytic subunit (pyrD) (Pyrococcus horikoshii (strain ATCC 700860 / DSM 12428 / JCM 9974 / NBRC 100139 / OT-3)).